The sequence spans 307 residues: ATP synthase gamma chain (307 aa).

This sequence belongs to the ATPase gamma chain family. F-type ATPases have 2 components, CF(1) - the catalytic core - and CF(0) - the membrane proton channel. CF(1) has five subunits: alpha(3), beta(3), gamma(1), delta(1), epsilon(1). CF(0) has three main subunits: a, b and c.

Its subcellular location is the cell membrane. Produces ATP from ADP in the presence of a proton gradient across the membrane. The gamma chain is believed to be important in regulating ATPase activity and the flow of protons through the CF(0) complex. In Bifidobacterium longum (strain DJO10A), this protein is ATP synthase gamma chain.